The primary structure comprises 609 residues: Arginine--tRNA ligase (609 aa).

A 'HIGH' region motif is present at residues 132-142 (ANPTSSLHVGH).

Belongs to the class-I aminoacyl-tRNA synthetase family. Monomer.

It localises to the cytoplasm. The enzyme catalyses tRNA(Arg) + L-arginine + ATP = L-arginyl-tRNA(Arg) + AMP + diphosphate. The protein is Arginine--tRNA ligase of Psychrobacter sp. (strain PRwf-1).